Consider the following 431-residue polypeptide: Enolase (431 aa).

Residue Gln-164 participates in (2R)-2-phosphoglycerate binding. Residue Glu-206 is the Proton donor of the active site. 3 residues coordinate Mg(2+): Asp-243, Glu-286, and Asp-313. Positions 338, 367, 368, and 389 each coordinate (2R)-2-phosphoglycerate. The Proton acceptor role is filled by Lys-338.

Belongs to the enolase family. The cofactor is Mg(2+).

It localises to the cytoplasm. The protein localises to the secreted. Its subcellular location is the cell surface. The enzyme catalyses (2R)-2-phosphoglycerate = phosphoenolpyruvate + H2O. It functions in the pathway carbohydrate degradation; glycolysis; pyruvate from D-glyceraldehyde 3-phosphate: step 4/5. Catalyzes the reversible conversion of 2-phosphoglycerate (2-PG) into phosphoenolpyruvate (PEP). It is essential for the degradation of carbohydrates via glycolysis. In Chloroflexus aggregans (strain MD-66 / DSM 9485), this protein is Enolase.